Consider the following 139-residue polypeptide: Single-stranded DNA-binding protein 2 (139 aa).

In terms of domain architecture, SSB spans 1-104 (MLNRTVLVGR…VVADSVQFLE (104 aa)). A disordered region spans residues 103–139 (LEPKNNNKQNNQQHNGQTQTGNNPFDNTEEDFSDLPF). Low complexity predominate over residues 106–125 (KNNNKQNNQQHNGQTQTGNN). The span at 129-139 (NTEEDFSDLPF) shows a compositional bias: acidic residues.

As to quaternary structure, homotetramer.

This is Single-stranded DNA-binding protein 2 (ssb-p) from Staphylococcus aureus (strain COL).